A 150-amino-acid chain; its full sequence is UPF0506 protein SJCHGC02380 (150 aa).

Positions Met1–Ser18 are cleaved as a signal peptide. 6 N-linked (GlcNAc...) asparagine glycosylation sites follow: Asn20, Asn24, Asn36, Asn48, Asn52, and Asn110. Disulfide bonds link Cys116–Cys130, Cys123–Cys134, and Cys129–Cys139.

It belongs to the UPF0506 family.

It localises to the secreted. The protein is UPF0506 protein SJCHGC02380 of Schistosoma japonicum (Blood fluke).